A 101-amino-acid chain; its full sequence is Small ribosomal subunit protein bS18c (101 aa).

Over residues 1 to 19 (MDKSKQLFRKSKGSFRRRL) the composition is skewed to basic residues. Residues 1 to 23 (MDKSKQLFRKSKGSFRRRLPPIG) are disordered.

Belongs to the bacterial ribosomal protein bS18 family. Part of the 30S ribosomal subunit.

The protein resides in the plastid. The protein localises to the chloroplast. The protein is Small ribosomal subunit protein bS18c of Acorus gramineus (Dwarf sweet flag).